A 110-amino-acid chain; its full sequence is MSGPTIAAEGVTNPPIDELLTKTDSKYKLVLYSAKRARQINAYYSQLGEGLLEYVGPLVDTHVQEKPLSIALREINEDLLTCEDVDPAELAAEEAAAQAAAADAGSSFSE.

It belongs to the RNA polymerase subunit omega family. As to quaternary structure, the RNAP catalytic core consists of 2 alpha, 1 beta, 1 beta' and 1 omega subunit. When a sigma factor is associated with the core the holoenzyme is formed, which can initiate transcription.

The catalysed reaction is RNA(n) + a ribonucleoside 5'-triphosphate = RNA(n+1) + diphosphate. In terms of biological role, promotes RNA polymerase assembly. Latches the N- and C-terminal regions of the beta' subunit thereby facilitating its interaction with the beta and alpha subunits. This Nocardioides sp. (strain ATCC BAA-499 / JS614) protein is DNA-directed RNA polymerase subunit omega.